The following is a 105-amino-acid chain: Large ribosomal subunit protein uL24 (105 aa).

It belongs to the universal ribosomal protein uL24 family. Part of the 50S ribosomal subunit.

Its function is as follows. One of two assembly initiator proteins, it binds directly to the 5'-end of the 23S rRNA, where it nucleates assembly of the 50S subunit. Functionally, one of the proteins that surrounds the polypeptide exit tunnel on the outside of the subunit. This chain is Large ribosomal subunit protein uL24, found in Mycobacterium avium (strain 104).